The chain runs to 326 residues: Ketol-acid reductoisomerase (NADP(+)) (326 aa).

Residues 1-180 form the KARI N-terminal Rossmann domain; it reads MDIIHDNAAD…GLTRGGVLEC (180 aa). Residues 24–27, arginine 47, and serine 51 each bind NADP(+); that span reads YGAQ. Histidine 106 is an active-site residue. Glycine 132 contributes to the NADP(+) binding site. One can recognise a KARI C-terminal knotted domain in the interval 181 to 326; it reads TMAQETYEDL…AKIRSLFERN (146 aa). Mg(2+) contacts are provided by aspartate 189, glutamate 193, glutamate 225, and glutamate 229. Serine 250 serves as a coordination point for substrate.

This sequence belongs to the ketol-acid reductoisomerase family. Mg(2+) is required as a cofactor.

The enzyme catalyses (2R)-2,3-dihydroxy-3-methylbutanoate + NADP(+) = (2S)-2-acetolactate + NADPH + H(+). It catalyses the reaction (2R,3R)-2,3-dihydroxy-3-methylpentanoate + NADP(+) = (S)-2-ethyl-2-hydroxy-3-oxobutanoate + NADPH + H(+). Its pathway is amino-acid biosynthesis; L-isoleucine biosynthesis; L-isoleucine from 2-oxobutanoate: step 2/4. It participates in amino-acid biosynthesis; L-valine biosynthesis; L-valine from pyruvate: step 2/4. In terms of biological role, involved in the biosynthesis of branched-chain amino acids (BCAA). Catalyzes an alkyl-migration followed by a ketol-acid reduction of (S)-2-acetolactate (S2AL) to yield (R)-2,3-dihydroxy-isovalerate. In the isomerase reaction, S2AL is rearranged via a Mg-dependent methyl migration to produce 3-hydroxy-3-methyl-2-ketobutyrate (HMKB). In the reductase reaction, this 2-ketoacid undergoes a metal-dependent reduction by NADPH to yield (R)-2,3-dihydroxy-isovalerate. This Akkermansia muciniphila (strain ATCC BAA-835 / DSM 22959 / JCM 33894 / BCRC 81048 / CCUG 64013 / CIP 107961 / Muc) protein is Ketol-acid reductoisomerase (NADP(+)).